Here is a 710-residue protein sequence, read N- to C-terminus: Chaperonin-containing T-complex member BBS12 (710 aa).

Belongs to the TCP-1 chaperonin family. BBS12 subfamily. Component of the chaperonin-containing T-complex (TRiC), a heterooligomeric complex of about 850 to 900 kDa that forms two stacked rings, 12 to 16 nm in diameter. Interacts with MKKS.

The protein resides in the cell projection. It localises to the cilium. In terms of biological role, component of the chaperonin-containing T-complex (TRiC), a molecular chaperone complex that assists the folding of proteins upon ATP hydrolysis. As part of the TRiC complex may play a role in the assembly of BBSome, a complex involved in ciliogenesis regulating transports vesicles to the cilia. Involved in adipogenic differentiation. The polypeptide is Chaperonin-containing T-complex member BBS12 (BBS12) (Homo sapiens (Human)).